Consider the following 184-residue polypeptide: ATP synthase subunit b, chloroplastic (184 aa).

The helical transmembrane segment at leucine 27–leucine 49 threads the bilayer.

It belongs to the ATPase B chain family. As to quaternary structure, F-type ATPases have 2 components, F(1) - the catalytic core - and F(0) - the membrane proton channel. F(1) has five subunits: alpha(3), beta(3), gamma(1), delta(1), epsilon(1). F(0) has four main subunits: a(1), b(1), b'(1) and c(10-14). The alpha and beta chains form an alternating ring which encloses part of the gamma chain. F(1) is attached to F(0) by a central stalk formed by the gamma and epsilon chains, while a peripheral stalk is formed by the delta, b and b' chains.

The protein resides in the plastid. The protein localises to the chloroplast thylakoid membrane. Its function is as follows. F(1)F(0) ATP synthase produces ATP from ADP in the presence of a proton or sodium gradient. F-type ATPases consist of two structural domains, F(1) containing the extramembraneous catalytic core and F(0) containing the membrane proton channel, linked together by a central stalk and a peripheral stalk. During catalysis, ATP synthesis in the catalytic domain of F(1) is coupled via a rotary mechanism of the central stalk subunits to proton translocation. Functionally, component of the F(0) channel, it forms part of the peripheral stalk, linking F(1) to F(0). The polypeptide is ATP synthase subunit b, chloroplastic (Lotus japonicus (Lotus corniculatus var. japonicus)).